The sequence spans 207 residues: Hydrogenase expression/formation protein HoxM (207 aa).

Ni(2+) is bound by residues E19, D65, and H96.

Belongs to the peptidase A31 family.

Functionally, not known. Could be involved in the processing of hydrogenase. In Azotobacter vinelandii, this protein is Hydrogenase expression/formation protein HoxM (hoxM).